The sequence spans 684 residues: DNA-directed RNA polymerase subunit beta' (684 aa).

Positions 69, 71, 87, and 90 each coordinate Zn(2+). Aspartate 489, aspartate 491, and aspartate 493 together coordinate Mg(2+).

It belongs to the RNA polymerase beta' chain family. RpoC1 subfamily. As to quaternary structure, in plastids the minimal PEP RNA polymerase catalytic core is composed of four subunits: alpha, beta, beta', and beta''. When a (nuclear-encoded) sigma factor is associated with the core the holoenzyme is formed, which can initiate transcription. It depends on Mg(2+) as a cofactor. Zn(2+) is required as a cofactor.

Its subcellular location is the plastid. It is found in the chloroplast. The catalysed reaction is RNA(n) + a ribonucleoside 5'-triphosphate = RNA(n+1) + diphosphate. Functionally, DNA-dependent RNA polymerase catalyzes the transcription of DNA into RNA using the four ribonucleoside triphosphates as substrates. In Marchantia polymorpha (Common liverwort), this protein is DNA-directed RNA polymerase subunit beta'.